The following is a 314-amino-acid chain: DNA-directed RNA polymerase subunit alpha (314 aa).

Positions 1–228 (MIEIEKPKIE…EHLNIFVGLT (228 aa)) are alpha N-terminal domain (alpha-NTD). The tract at residues 245–314 (KEKVLEMTIE…ELGLGLRKDD (70 aa)) is alpha C-terminal domain (alpha-CTD).

This sequence belongs to the RNA polymerase alpha chain family. As to quaternary structure, homodimer. RNAP is composed of a core of 2 alpha, a beta and a beta' subunit. The core is associated with a delta subunit, and at least one of epsilon or omega. When a sigma factor is associated with the core the holoenzyme is formed, which can initiate transcription.

It carries out the reaction RNA(n) + a ribonucleoside 5'-triphosphate = RNA(n+1) + diphosphate. Its function is as follows. DNA-dependent RNA polymerase catalyzes the transcription of DNA into RNA using the four ribonucleoside triphosphates as substrates. This is DNA-directed RNA polymerase subunit alpha from Bacillus subtilis (strain 168).